The primary structure comprises 101 residues: Small ribosomal subunit protein uS14 (101 aa).

This sequence belongs to the universal ribosomal protein uS14 family. Part of the 30S ribosomal subunit. Contacts proteins S3 and S10.

Its function is as follows. Binds 16S rRNA, required for the assembly of 30S particles and may also be responsible for determining the conformation of the 16S rRNA at the A site. This chain is Small ribosomal subunit protein uS14, found in Shewanella denitrificans (strain OS217 / ATCC BAA-1090 / DSM 15013).